A 222-amino-acid polypeptide reads, in one-letter code: Pleckstrin homology domain-containing family B member 2 (222 aa).

The region spanning 2 to 109 is the PH domain; sequence AFVKSGWLLR…WKFTLQDSRT (108 aa). Residue K20 coordinates a 1,2-diacyl-sn-glycero-3-phospho-L-serine.

It is found in the recycling endosome membrane. Functionally, involved in retrograde transport of recycling endosomes. The protein is Pleckstrin homology domain-containing family B member 2 (PLEKHB2) of Pongo abelii (Sumatran orangutan).